We begin with the raw amino-acid sequence, 364 residues long: MKRPLVDYDSGSGSESECGSSSDGPKSSSTNIPPQLKKRRNGDIGTRAPPSAPASTPIAPLGRSSGTHTIPPKPAPKSTSSLPPISDRFNDLYASNTRTAVSDDPSLHQGRQRQVPHIPGNWPSHVYIDWDPSSGDRELLSSLVDKLQTRVAAAAQRYPDLEGVKISTALRDPELPVDKPLHISLSAPLTLTSKNKDAFLDDVTRALRSSGVSPFVVDFSGGVNWYRSEESTRSFLVLRVREVQNTGMTTADSSPNPRLTTLLQRCNKTAKEYGQPPLYDSQDMGYRFHVTIAWTHARPSESLKQLTDSIFDDCKTMYSENMSIRDKLCTGSSFRVETVKVKIGNHVTRFELPDKGLALPVKTT.

Positions 1 to 120 (MKRPLVDYDS…RQRQVPHIPG (120 aa)) are disordered. The span at 9 to 29 (DSGSGSESECGSSSDGPKSSS) shows a compositional bias: low complexity. Histidine 182 acts as the Proton acceptor in catalysis. AMP is bound by residues 182 to 184 (HIS), tyrosine 279, and 281 to 291 (SQDMGYRFHVT). UMP contacts are provided by residues tyrosine 279 and 287-291 (RFHVT). Histidine 289 functions as the Proton donor in the catalytic mechanism.

It belongs to the 2H phosphoesterase superfamily. USB1 family.

The protein resides in the nucleus. In terms of biological role, 3'-5' RNA exonuclease that trims the 3' end of oligo(U) tracts of the pre-U6 small nuclear RNA (snRNA) molecule, leading to the formation of a U6 snRNA 3' end-terminated with a 2',3'-cyclic phosphate. Participates in the U6 snRNA 3' end processing that prevents U6 snRNA degradation. The sequence is that of U6 snRNA phosphodiesterase 1 (usb1) from Neurospora crassa (strain ATCC 24698 / 74-OR23-1A / CBS 708.71 / DSM 1257 / FGSC 987).